Here is a 403-residue protein sequence, read N- to C-terminus: S-adenosylmethionine synthase (403 aa).

An ATP-binding site is contributed by His15. Asp17 is a Mg(2+) binding site. Glu43 provides a ligand contact to K(+). Residues Glu56 and Gln99 each coordinate L-methionine. The tract at residues 99-109 is flexible loop; the sequence is QSPDINQGVDR. ATP is bound by residues 166–168, 232–233, Asp241, 247–248, Ala264, and Lys268; these read DAK, KF, and RK. Asp241 contacts L-methionine. Lys272 serves as a coordination point for L-methionine.

The protein belongs to the AdoMet synthase family. In terms of assembly, homotetramer; dimer of dimers. Mg(2+) is required as a cofactor. K(+) serves as cofactor.

The protein localises to the cytoplasm. The catalysed reaction is L-methionine + ATP + H2O = S-adenosyl-L-methionine + phosphate + diphosphate. The protein operates within amino-acid biosynthesis; S-adenosyl-L-methionine biosynthesis; S-adenosyl-L-methionine from L-methionine: step 1/1. Functionally, catalyzes the formation of S-adenosylmethionine (AdoMet) from methionine and ATP. The overall synthetic reaction is composed of two sequential steps, AdoMet formation and the subsequent tripolyphosphate hydrolysis which occurs prior to release of AdoMet from the enzyme. The chain is S-adenosylmethionine synthase from Xanthomonas campestris pv. campestris (strain 8004).